The primary structure comprises 476 residues: Protein transport protein Sec61 subunit alpha (476 aa).

The Cytoplasmic segment spans residues 2 to 33; that stretch reads GIKFLEFIKPFCAVLPEIQKPERKIQFREKVL. Residues 34–53 traverse the membrane as a helical segment; the sequence is WTAITLFIFLVCCQIPLFGI. At 54–76 the chain is on the lumenal side; the sequence is MSSDSADPFYWMRVILASNRGTL. A helical membrane pass occupies residues 77–96; that stretch reads MELGIAPIVTSGLIMQLLAG. The Cytoplasmic segment spans residues 97–117; sequence AKIIEVGDTPKDRALFNGAQK. Residues 118–138 traverse the membrane as a helical segment; that stretch reads LFGMIITIGQAIVYVMTGMYG. The Lumenal portion of the chain corresponds to 139 to 144; sequence DPSEMG. The helical transmembrane segment at 145 to 165 threads the bilayer; sequence AGICLLIIIQLFVAGLIVLLL. Residues 166–172 lie on the Cytoplasmic side of the membrane; the sequence is DELLQKG. Residues 173-193 form a helical membrane-spanning segment; it reads YGLGSGISLFIATNICETIVW. Residues 194–240 lie on the Lumenal side of the membrane; it reads KAFGPTTVNTGRGTEFEGAIIALFHLLATRTDKVRALREAFYRQNLP. A helical membrane pass occupies residues 241-261; sequence NLMNLIATVFVFAVVIYFQGF. Topologically, residues 262 to 288 are cytoplasmic; it reads RVDLPIKSARYRGQYNTYPIKLFYTSN. A helical membrane pass occupies residues 289 to 309; sequence IPIILQSALVSNLYVISQMLS. The Lumenal portion of the chain corresponds to 310-354; the sequence is TRFSGNFLVNLLGTWSDATTSGPARAYPVAGLCYYLSPPESFGSV. The helical transmembrane segment at 355 to 375 threads the bilayer; sequence LDDPVHAVIYIVFMLGSCAFF. The Cytoplasmic segment spans residues 376-420; that stretch reads SKTWIEVSGSSAKDVAKQLKEQQMVMRGHRETSMVHELNRYIPTA. Residues 421–441 form a helical membrane-spanning segment; the sequence is AAFGGLCIGGLSVMADFLGAI. The Lumenal segment spans residues 442-445; sequence GSGT. A helical membrane pass occupies residues 446-462; it reads GILLAVTIIYQYFEIFV. The Cytoplasmic portion of the chain corresponds to 463-476; it reads KEQSEVGSMGALLF.

The protein belongs to the SecY/SEC61-alpha family. As to quaternary structure, the SEC61 channel-forming translocon complex consists of channel-forming core components SEC61A1, SEC61B and SEC61G and different auxiliary components such as SEC62 and SEC63. The SEC61 channel associates with the multi-pass translocon (MPT) complex.

Its subcellular location is the endoplasmic reticulum membrane. In terms of biological role, component of SEC61 channel-forming translocon complex that mediates transport of signal peptide-containing precursor polypeptides across the endoplasmic reticulum (ER). Forms a ribosome receptor and a gated pore in the ER membrane, both functions required for cotranslational translocation of nascent polypeptides. May cooperate with auxiliary protein SEC62, SEC63 and HSPA5/BiP to enable post-translational transport of small presecretory proteins. The SEC61 channel is also involved in ER membrane insertion of transmembrane proteins: it mediates membrane insertion of the first few transmembrane segments of proteins, while insertion of subsequent transmembrane regions of multi-pass membrane proteins is mediated by the multi-pass translocon (MPT) complex. This is Protein transport protein Sec61 subunit alpha (sec61a) from Bovichtus variegatus (Thornfish).